The sequence spans 206 residues: Small ribosomal subunit protein uS5 (206 aa).

The interval 1 to 42 (MENKTEVVVAENANNQTQPERKKFDRKPNRRPQGPKQFQKDD) is disordered. An S5 DRBM domain is found at 43–106 (FEEKVVTIRR…KEAKKNLIRV (64 aa)).

The protein belongs to the universal ribosomal protein uS5 family. In terms of assembly, part of the 30S ribosomal subunit. Contacts proteins S4 and S8.

Functionally, with S4 and S12 plays an important role in translational accuracy. In terms of biological role, located at the back of the 30S subunit body where it stabilizes the conformation of the head with respect to the body. The protein is Small ribosomal subunit protein uS5 of Mesoplasma florum (strain ATCC 33453 / NBRC 100688 / NCTC 11704 / L1) (Acholeplasma florum).